The sequence spans 128 residues: uncharacterized protein (128 aa).

One can recognise a VOC domain in the interval 2 to 127; sequence KLLQIRLLVN…DHNLIEIYKM (126 aa). The Ni(2+) site is built by glutamate 48 and glutamate 123.

Belongs to the glyoxalase I family.

This is an uncharacterized protein from Bacillus subtilis (strain 168).